The primary structure comprises 287 residues: Methylamine utilization ferredoxin-type protein MauN (287 aa).

4Fe-4S ferredoxin-type domains follow at residues Arg218 to Lys248 and Gly251 to Arg280. Residues Cys227, Cys230, Cys233, Cys237, Cys260, Cys263, Cys266, and Cys270 each coordinate [4Fe-4S] cluster.

The protein operates within one-carbon metabolism; methylamine degradation. Its function is as follows. Involved in electron transfer. This chain is Methylamine utilization ferredoxin-type protein MauN (mauN), found in Methylorubrum extorquens (strain ATCC 14718 / DSM 1338 / JCM 2805 / NCIMB 9133 / AM1) (Methylobacterium extorquens).